Reading from the N-terminus, the 1046-residue chain is Protein HBT1 (1046 aa).

Disordered regions lie at residues 1–455 (MNMN…AAEK), 469–894 (DYQQ…LGGA), and 908–1046 (PSLI…RSEI). The residue at position 41 (Ser-41) is a Phosphoserine. Positions 81–96 (KDSETPHEDTEADANR) are enriched in basic and acidic residues. Polar residues-rich tracts occupy residues 98–149 (ANVT…SPPT), 175–191 (IATT…TSPV), and 228–301 (ANTG…NTDS). At Ser-303 the chain carries Phosphoserine. The span at 327–341 (VYTSTGPKSNVSSGM) shows a compositional bias: polar residues. Ser-363 carries the phosphoserine modification. 2 stretches are compositionally biased toward polar residues: residues 389 to 408 (QTGL…QQTM) and 420 to 429 (GFVSQQPSYH). Basic and acidic residues predominate over residues 430-455 (DSNKNIQHPEKNKVDNKNISERAAEK). Polar residues predominate over residues 488-498 (YSSSAGKNKNL). Ser-491 is subject to Phosphoserine. The segment covering 529–538 (GHMKYNDNGR) has biased composition (basic and acidic residues). Positions 548–559 (QAGSQNTNNNID) are enriched in polar residues. Ser-561 bears the Phosphoserine mark. Residues 570–582 (GLSNDATTRNNVV) show a composition bias toward polar residues. Basic and acidic residues predominate over residues 586–597 (MKDEDMNEDSTK). The segment covering 605–619 (YLDDVEDYHENDIDD) has biased composition (acidic residues). Residues 621–630 (SNAKKNDLYS) are compositionally biased toward basic and acidic residues. Residue Ser-671 is modified to Phosphoserine. The span at 742 to 756 (FTNNPETGTTGNVDT) shows a compositional bias: polar residues. Positions 773–782 (DDSKNTDTHL) are enriched in basic and acidic residues. Polar residues-rich tracts occupy residues 792 to 802 (NSRSGDTTYSK) and 837 to 855 (SSEQ…NQEY). Tyr-855 carries the post-translational modification Phosphotyrosine. The residue at position 857 (Ser-857) is a Phosphoserine. The segment covering 868 to 890 (KVLEEDAPGYKREVDLKNKRRTD) has biased composition (basic and acidic residues). Residues 922-951 (DTNTSSSQKPSEGTYPETTSYSIHNETTSQ) are compositionally biased toward polar residues. Over residues 952-963 (GRKVSVGSMGSG) the composition is skewed to low complexity. Basic residues predominate over residues 964 to 976 (KSKHHHNHHRHSR). Ser-1005 bears the Phosphoserine mark. Residues 1006-1019 (DEGEQDYHDDEQGE) are compositionally biased toward acidic residues. The residue at position 1034 (Ser-1034) is a Phosphoserine.

As to quaternary structure, conjugated with HUB1. HUB1 has not the classical C-terminal Gly residue, so it is still unknown how conjugation may occur.

It is found in the cytoplasm. In terms of biological role, polarity-determining protein which forms a conjugate with the ubiquitin-like modifier HUB1. Involved in bud site selection and cellular morphogenesis during conjugation. Required for survival during stationary phase. The polypeptide is Protein HBT1 (HBT1) (Saccharomyces cerevisiae (strain ATCC 204508 / S288c) (Baker's yeast)).